The following is an 80-amino-acid chain: CLAVATA3/ESR (CLE)-related protein 4 (80 aa).

Residues 1 to 22 (MASFKLWVCLILLLLEFSVHQC) form the signal peptide. The interval 55–80 (SKDGQTVLGTLDSKRLSPGGPDPRHH) is disordered. A hydroxyproline mark is found at Pro-72 and Pro-75. The O-linked (Ara...) hydroxyproline glycan is linked to Pro-75.

It belongs to the CLV3/ESR signal peptide family. The O-glycosylation (arabinosylation) of the hydroxyproline Pro-75 enhances binding affinity of the CLE4p peptide for its receptor. In terms of tissue distribution, expressed in roots and seedlings.

Its subcellular location is the secreted. It localises to the extracellular space. Functionally, extracellular signal peptide that regulates cell fate. This chain is CLAVATA3/ESR (CLE)-related protein 4, found in Arabidopsis thaliana (Mouse-ear cress).